A 267-amino-acid polypeptide reads, in one-letter code: Transcription factor LBX1 (267 aa).

Positions 1 to 21 (MTSKDEAKSSASSVEERRRNA) are enriched in basic and acidic residues. Positions 1-36 (MTSKDEAKSSASSVEERRRNALDLLPPPANSNKPLT) are disordered. A DNA-binding region (homeobox) is located at residues 127–186 (RRKSRTAFTNHQIYELEKRFLYQKYLSPADRDQIAQQLGLTNAQVITWFQNRRAKLKRDL). The disordered stretch occupies residues 211–267 (SELEESGSERGNSRSRSPQLGLTSNHMPLSPSXPLTDQHASKECSEDEEDVEIDVDD). The span at 228–237 (PQLGLTSNHM) shows a compositional bias: polar residues. The segment covering 255–267 (SEDEEDVEIDVDD) has biased composition (acidic residues).

Expressed in all myoblasts that will populate body wall muscles as well as in a group of cells the migrate into the head.

It is found in the nucleus. Transcription factor that controls hypaxial muscle development by down-regulating myod1 and cdkn1b/p27, thereby allowing myoblasts to proliferate before the onset of terminal differentiation. The sequence is that of Transcription factor LBX1 from Xenopus laevis (African clawed frog).